The chain runs to 121 residues: Small ribosomal subunit protein uS13 (121 aa).

Positions 89–121 are disordered; sequence MRHRRGLPVRGQHTKNNARTRKGKAVSIAGKKK.

It belongs to the universal ribosomal protein uS13 family. In terms of assembly, part of the 30S ribosomal subunit. Forms a loose heterodimer with protein S19. Forms two bridges to the 50S subunit in the 70S ribosome.

Located at the top of the head of the 30S subunit, it contacts several helices of the 16S rRNA. In the 70S ribosome it contacts the 23S rRNA (bridge B1a) and protein L5 of the 50S subunit (bridge B1b), connecting the 2 subunits; these bridges are implicated in subunit movement. Contacts the tRNAs in the A and P-sites. The polypeptide is Small ribosomal subunit protein uS13 (Levilactobacillus brevis (strain ATCC 367 / BCRC 12310 / CIP 105137 / JCM 1170 / LMG 11437 / NCIMB 947 / NCTC 947) (Lactobacillus brevis)).